The following is a 104-amino-acid chain: MAVKRSSKLTQTAMLKQILKRCSSLAKNQCYDEDGLPVDVPKGHFPVYVGEKRSRYIVPISFLTHPKFKSLLQQAEEEFGFNHDMGLTIPCEEVVFRSLTSMIG.

Belongs to the ARG7 family. As to expression, expressed in flowers and etiolated hypocotyls.

The protein resides in the cell membrane. Functionally, provide a mechanistic link between auxin and plasma membrane H(+)-ATPases (PM H(+)-ATPases, e.g. AHA1 and AHA2), and triggers PM H(+)-ATPases activity by promoting phosphorylation of their C-terminal autoinhibitory domain as a result of PP2C-D subfamily of type 2C phosphatases inhibition, thus leading to the acidification of the apoplast and the facilitation of solutes and water uptake to drive cell expansion. Triggers plant growth probably by promoting cell elongation. Regulates branch angles and bending. The sequence is that of Protein SMALL AUXIN UP-REGULATED RNA 12 from Arabidopsis thaliana (Mouse-ear cress).